A 76-amino-acid chain; its full sequence is ATP synthase subunit c (76 aa).

2 helical membrane-spanning segments follow: residues 12–32 and 54–74; these read LGSI…GIIF and ILGF…PFVY.

This sequence belongs to the ATPase C chain family. In terms of assembly, F-type ATPases have 2 components, F(1) - the catalytic core - and F(0) - the membrane proton channel. F(1) has five subunits: alpha(3), beta(3), gamma(1), delta(1), epsilon(1). F(0) has three main subunits: a(1), b(2) and c(10-14). The alpha and beta chains form an alternating ring which encloses part of the gamma chain. F(1) is attached to F(0) by a central stalk formed by the gamma and epsilon chains, while a peripheral stalk is formed by the delta and b chains.

It localises to the cell membrane. Functionally, f(1)F(0) ATP synthase produces ATP from ADP in the presence of a proton or sodium gradient. F-type ATPases consist of two structural domains, F(1) containing the extramembraneous catalytic core and F(0) containing the membrane proton channel, linked together by a central stalk and a peripheral stalk. During catalysis, ATP synthesis in the catalytic domain of F(1) is coupled via a rotary mechanism of the central stalk subunits to proton translocation. Its function is as follows. Key component of the F(0) channel; it plays a direct role in translocation across the membrane. A homomeric c-ring of between 10-14 subunits forms the central stalk rotor element with the F(1) delta and epsilon subunits. The sequence is that of ATP synthase subunit c from Streptomyces coelicolor (strain ATCC BAA-471 / A3(2) / M145).